Consider the following 246-residue polypeptide: UPF0758 protein SSU98_1084 (246 aa).

Residues 103–225 enclose the MPN domain; the sequence is RILGSEKLGR…YYSFREESDV (123 aa). Residues His-174, His-176, and Asp-187 each contribute to the Zn(2+) site. A JAMM motif motif is present at residues 174 to 187; the sequence is HNHPSGSVQPSRND.

It belongs to the UPF0758 family.

The protein is UPF0758 protein SSU98_1084 of Streptococcus suis (strain 98HAH33).